We begin with the raw amino-acid sequence, 116 residues long: Putative RNase MJ0125 (116 aa).

Active-site residues include Arg-76 and His-81. An RX(4)HXY motif motif is present at residues 76 to 83; the sequence is RDKLIHQY. O-di-AMP-tyrosine is present on Tyr-83.

Belongs to the HepT RNase toxin family. In terms of assembly, homodimer, probably forms a complex with cognate antitoxin MJ0126. Post-translationally, modified by cognate antitoxin MJ0126; probably at least 2 successive AMPylation events occur on Tyr-83.

In terms of biological role, probable toxic component of a putative type VII toxin-antitoxin (TA) system, probably an RNase. Probably neutralized by cognate antitoxin MJ0126. Neutralization may be due to AMPylation by MJ0126. This Methanocaldococcus jannaschii (strain ATCC 43067 / DSM 2661 / JAL-1 / JCM 10045 / NBRC 100440) (Methanococcus jannaschii) protein is Putative RNase MJ0125.